Consider the following 339-residue polypeptide: Tetraacyldisaccharide 4'-kinase (339 aa).

Residue 53-60 participates in ATP binding; that stretch reads TCGGAGKT.

This sequence belongs to the LpxK family.

It catalyses the reaction a lipid A disaccharide + ATP = a lipid IVA + ADP + H(+). It participates in glycolipid biosynthesis; lipid IV(A) biosynthesis; lipid IV(A) from (3R)-3-hydroxytetradecanoyl-[acyl-carrier-protein] and UDP-N-acetyl-alpha-D-glucosamine: step 6/6. Functionally, transfers the gamma-phosphate of ATP to the 4'-position of a tetraacyldisaccharide 1-phosphate intermediate (termed DS-1-P) to form tetraacyldisaccharide 1,4'-bis-phosphate (lipid IVA). This is Tetraacyldisaccharide 4'-kinase from Bartonella henselae (strain ATCC 49882 / DSM 28221 / CCUG 30454 / Houston 1) (Rochalimaea henselae).